A 452-amino-acid polypeptide reads, in one-letter code: Translation initiation factor eIF2B subunit gamma (452 aa).

The residue at position 1 (methionine 1) is an N-acetylmethionine. The residue at position 261 (serine 261) is a Phosphoserine.

It belongs to the eIF-2B gamma/epsilon subunits family. As to quaternary structure, component of the translation initiation factor 2B (eIF2B) complex which is a heterodecamer of two sets of five different subunits: alpha, beta, gamma, delta and epsilon. Subunits alpha, beta and delta comprise a regulatory subcomplex and subunits epsilon and gamma comprise a catalytic subcomplex. Within the complex, the hexameric regulatory complex resides at the center, with the two heterodimeric catalytic subcomplexes bound on opposite sides.

Its subcellular location is the cytoplasm. It localises to the cytosol. Its activity is regulated as follows. Activated by the chemical integrated stress response (ISR) inhibitor ISRIB which stimulates guanine nucleotide exchange factor activity for both phosphorylated and unphosphorylated eIF2. Its function is as follows. Acts as a component of the translation initiation factor 2B (eIF2B) complex, which catalyzes the exchange of GDP for GTP on the eukaryotic initiation factor 2 (eIF2) complex gamma subunit. Its guanine nucleotide exchange factor activity is repressed when bound to eIF2 complex phosphorylated on the alpha subunit, thereby limiting the amount of methionyl-initiator methionine tRNA available to the ribosome and consequently global translation is repressed. The protein is Translation initiation factor eIF2B subunit gamma (EIF2B3) of Bos taurus (Bovine).